The chain runs to 607 residues: Coronin-like protein cor-1 (607 aa).

WD repeat units lie at residues 77-117, 127-167, and 170-209; these read AHKA…LNRN, GHQK…ALLE, and GHPD…VVHE. The interval 415–564 is disordered; it reads PTAAESVPTQ…VSAASDVGHV (150 aa). The span at 424–436 shows a compositional bias: low complexity; the sequence is QSYSERPPSSQQP. Pro residues predominate over residues 437–447; the sequence is SPRPSASPRPR. 2 stretches are compositionally biased toward basic and acidic residues: residues 473 to 489 and 517 to 533; these read SRTE…DPMK and AAAE…RTAD. A compositionally biased stretch (low complexity) spans 544 to 559; it reads SSRASASPRGSVSAAS. Residues 563 to 602 are a coiled coil; it reads HVPQNMDELLEDLMKMKAVLRQHERRIRMLEEEIADRNMS.

It belongs to the WD repeat coronin family.

The protein localises to the cytoplasm. Its subcellular location is the cytoskeleton. In terms of biological role, required to direct the migration of Q neuroblasts along the anterior axis of the body during larval development. This is dependent on its asymmetric expression in Q neuroblasts. The chain is Coronin-like protein cor-1 (cor-1) from Caenorhabditis elegans.